Consider the following 213-residue polypeptide: High frequency lysogenization protein HflD (213 aa).

Residues 79-126 (QGLNAELTRYTLSLMVLERKLSSAKGALDTLGNRINGLQRQLEHFDLQ) adopt a coiled-coil conformation.

The protein belongs to the HflD family. Interacts with CII protein from phage lambda.

It localises to the cytoplasm. The protein resides in the cell inner membrane. Negative regulator of phage lambda lysogenization. Contributes to the degradation of the phage regulatory protein CII. Acts probably by holding CII on the membrane surface, away from the target promoters, but close to the FtsH protease. The protein is High frequency lysogenization protein HflD of Escherichia coli O127:H6 (strain E2348/69 / EPEC).